The chain runs to 215 residues: uncharacterized protein (215 aa).

It belongs to the HAD-like hydrolase superfamily. CbbY/CbbZ/Gph/YieH family.

This is an uncharacterized protein from Lacticaseibacillus casei (Lactobacillus casei).